Reading from the N-terminus, the 962-residue chain is Glycine dehydrogenase (decarboxylating) (962 aa).

Lys709 carries the post-translational modification N6-(pyridoxal phosphate)lysine.

The protein belongs to the GcvP family. In terms of assembly, the glycine cleavage system is composed of four proteins: P, T, L and H. Requires pyridoxal 5'-phosphate as cofactor.

It catalyses the reaction N(6)-[(R)-lipoyl]-L-lysyl-[glycine-cleavage complex H protein] + glycine + H(+) = N(6)-[(R)-S(8)-aminomethyldihydrolipoyl]-L-lysyl-[glycine-cleavage complex H protein] + CO2. The glycine cleavage system catalyzes the degradation of glycine. The P protein binds the alpha-amino group of glycine through its pyridoxal phosphate cofactor; CO(2) is released and the remaining methylamine moiety is then transferred to the lipoamide cofactor of the H protein. This chain is Glycine dehydrogenase (decarboxylating), found in Shewanella putrefaciens (strain CN-32 / ATCC BAA-453).